The chain runs to 163 residues: ATP synthase subunit b 1 (163 aa).

The chain crosses the membrane as a helical span at residues 7-27 (AETWVAIAFVILLGVFAYLGV).

The protein belongs to the ATPase B chain family. In terms of assembly, F-type ATPases have 2 components, F(1) - the catalytic core - and F(0) - the membrane proton channel. F(1) has five subunits: alpha(3), beta(3), gamma(1), delta(1), epsilon(1). F(0) has three main subunits: a(1), b(2) and c(10-14). The alpha and beta chains form an alternating ring which encloses part of the gamma chain. F(1) is attached to F(0) by a central stalk formed by the gamma and epsilon chains, while a peripheral stalk is formed by the delta and b chains.

It is found in the cell inner membrane. Functionally, f(1)F(0) ATP synthase produces ATP from ADP in the presence of a proton or sodium gradient. F-type ATPases consist of two structural domains, F(1) containing the extramembraneous catalytic core and F(0) containing the membrane proton channel, linked together by a central stalk and a peripheral stalk. During catalysis, ATP synthesis in the catalytic domain of F(1) is coupled via a rotary mechanism of the central stalk subunits to proton translocation. Its function is as follows. Component of the F(0) channel, it forms part of the peripheral stalk, linking F(1) to F(0). This is ATP synthase subunit b 1 from Rhodopseudomonas palustris (strain ATCC BAA-98 / CGA009).